A 78-amino-acid polypeptide reads, in one-letter code: Sec-independent protein translocase protein TatA (78 aa).

A helical transmembrane segment spans residues 4–21 (SFQHILILLVVVLLLFGR). The segment at 49–78 (TAKSDSIKTIDNTGKPTNVQANPQRQDSTV) is disordered. Residues 57–78 (TIDNTGKPTNVQANPQRQDSTV) show a composition bias toward polar residues.

This sequence belongs to the TatA/E family. As to quaternary structure, the Tat system comprises two distinct complexes: a TatABC complex, containing multiple copies of TatA, TatB and TatC subunits, and a separate TatA complex, containing only TatA subunits. Substrates initially bind to the TatABC complex, which probably triggers association of the separate TatA complex to form the active translocon.

The protein localises to the cell inner membrane. In terms of biological role, part of the twin-arginine translocation (Tat) system that transports large folded proteins containing a characteristic twin-arginine motif in their signal peptide across membranes. TatA could form the protein-conducting channel of the Tat system. This is Sec-independent protein translocase protein TatA from Afipia carboxidovorans (strain ATCC 49405 / DSM 1227 / KCTC 32145 / OM5) (Oligotropha carboxidovorans).